The sequence spans 151 residues: Cytochrome c-type biogenesis protein CcmE (151 aa).

At 1–8 the chain is on the cytoplasmic side; the sequence is MNPLRKKR. A helical; Signal-anchor for type II membrane protein transmembrane segment spans residues 9–29; that stretch reads LLIILAILVGVGIAVGLALSA. Residues 30-151 lie on the Periplasmic side of the membrane; the sequence is LKENINLFYT…QSAPTPAKEG (122 aa). His124 and Tyr128 together coordinate heme. Residues 131–151 are disordered; the sequence is PEVTKALKDSGQSAPTPAKEG.

Belongs to the CcmE/CycJ family.

The protein resides in the cell inner membrane. Heme chaperone required for the biogenesis of c-type cytochromes. Transiently binds heme delivered by CcmC and transfers the heme to apo-cytochromes in a process facilitated by CcmF and CcmH. In Pseudomonas fluorescens (strain ATCC BAA-477 / NRRL B-23932 / Pf-5), this protein is Cytochrome c-type biogenesis protein CcmE.